Consider the following 239-residue polypeptide: Cysteine-rich venom protein (239 aa).

A signal peptide spans M1–G19. Positions D39–Y166 constitute an SCP domain. 8 cysteine pairs are disulfide-bonded: C75-C153, C92-C167, C148-C164, C186-C193, C189-C198, C202-C234, C211-C228, and C219-C232. In terms of domain architecture, ShKT spans C202–C234.

Belongs to the CRISP family. In terms of tissue distribution, expressed by the venom gland.

Its subcellular location is the secreted. Functionally, blocks contraction of smooth muscle elicited by high potassium-induced depolarization, but does not block caffeine-stimulated contraction. May target voltage-gated calcium channels in smooth muscle. This chain is Cysteine-rich venom protein, found in Vipera berus (Common European adder).